The chain runs to 202 residues: NADH-quinone oxidoreductase subunit C (202 aa).

Belongs to the complex I 30 kDa subunit family. In terms of assembly, NDH-1 is composed of 14 different subunits. Subunits NuoB, C, D, E, F, and G constitute the peripheral sector of the complex.

It localises to the cell inner membrane. It catalyses the reaction a quinone + NADH + 5 H(+)(in) = a quinol + NAD(+) + 4 H(+)(out). Its function is as follows. NDH-1 shuttles electrons from NADH, via FMN and iron-sulfur (Fe-S) centers, to quinones in the respiratory chain. The immediate electron acceptor for the enzyme in this species is believed to be ubiquinone. Couples the redox reaction to proton translocation (for every two electrons transferred, four hydrogen ions are translocated across the cytoplasmic membrane), and thus conserves the redox energy in a proton gradient. This chain is NADH-quinone oxidoreductase subunit C, found in Paracidovorax citrulli (strain AAC00-1) (Acidovorax citrulli).